Reading from the N-terminus, the 103-residue chain is Small ribosomal subunit protein uS10 (103 aa).

It belongs to the universal ribosomal protein uS10 family. In terms of assembly, part of the 30S ribosomal subunit.

In terms of biological role, involved in the binding of tRNA to the ribosomes. In Neisseria gonorrhoeae, this protein is Small ribosomal subunit protein uS10.